We begin with the raw amino-acid sequence, 395 residues long: Phosphopentomutase (395 aa).

Mn(2+) is bound by residues aspartate 14, aspartate 289, histidine 294, aspartate 330, histidine 331, and histidine 342.

The protein belongs to the phosphopentomutase family. Mn(2+) is required as a cofactor.

The protein resides in the cytoplasm. The catalysed reaction is 2-deoxy-alpha-D-ribose 1-phosphate = 2-deoxy-D-ribose 5-phosphate. It carries out the reaction alpha-D-ribose 1-phosphate = D-ribose 5-phosphate. It participates in carbohydrate degradation; 2-deoxy-D-ribose 1-phosphate degradation; D-glyceraldehyde 3-phosphate and acetaldehyde from 2-deoxy-alpha-D-ribose 1-phosphate: step 1/2. In terms of biological role, isomerase that catalyzes the conversion of deoxy-ribose 1-phosphate (dRib-1-P) and ribose 1-phosphate (Rib-1-P) to deoxy-ribose 5-phosphate (dRib-5-P) and ribose 5-phosphate (Rib-5-P), respectively. The sequence is that of Phosphopentomutase from Mycoplasmopsis pulmonis (strain UAB CTIP) (Mycoplasma pulmonis).